Here is an 88-residue protein sequence, read N- to C-terminus: Pape peptide (88 aa).

An N-terminal signal peptide occupies residues 1 to 22; the sequence is MNRKTLLVIFFVTLLIAEEVNS. Positions 23-45 are excised as a propeptide; sequence FRLGGFLKKIWRSKLVKRLRSKG. A disordered region spans residues 49-88; the sequence is LKEALAPEPAPEPAPEPAPEAAPEAAPEPAAAAPERRRRR. A compositionally biased stretch (pro residues) spans 56-68; sequence EPAPEPAPEPAPE. PAPE repeat units lie at residues 57 to 60, 61 to 64, and 65 to 68; these read PAPE. A compositionally biased stretch (low complexity) spans 69 to 81; that stretch reads AAPEAAPEPAAAA.

Expressed by the venom gland.

It localises to the secreted. The protein is Pape peptide of Tityus serrulatus (Brazilian scorpion).